Reading from the N-terminus, the 493-residue chain is Ribulose bisphosphate carboxylase large chain (493 aa).

Asparagine 132 is a substrate binding site. Residue cysteine 181 is modified to S-nitrosocysteine. A substrate-binding site is contributed by threonine 182. The active-site Proton acceptor is the lysine 184. Position 186 (lysine 186) interacts with substrate. Positions 210, 212, and 213 each coordinate Mg(2+). Lysine 210 bears the N6-carboxylysine mark. Histidine 302 functions as the Proton acceptor in the catalytic mechanism. Substrate contacts are provided by arginine 303, histidine 335, and serine 387. Cysteine 460 is modified (S-nitrosocysteine).

The protein belongs to the RuBisCO large chain family. Type I subfamily. Heterohexadecamer of 8 large chains and 8 small chains. Requires Mg(2+) as cofactor.

The protein resides in the plastid. Its subcellular location is the chloroplast. It carries out the reaction 2 (2R)-3-phosphoglycerate + 2 H(+) = D-ribulose 1,5-bisphosphate + CO2 + H2O. It catalyses the reaction D-ribulose 1,5-bisphosphate + O2 = 2-phosphoglycolate + (2R)-3-phosphoglycerate + 2 H(+). In terms of biological role, ruBisCO catalyzes two reactions: the carboxylation of D-ribulose 1,5-bisphosphate, the primary event in carbon dioxide fixation, as well as the oxidative fragmentation of the pentose substrate in the photorespiration process. Both reactions occur simultaneously and in competition at the same active site. Carbon dioxide and oxygen bind in the same pocket of the enzyme in a similar manner. The sequence is that of Ribulose bisphosphate carboxylase large chain from Galdieria sulphuraria (Red alga).